The sequence spans 510 residues: ATP synthase subunit alpha (510 aa).

G169–T176 contributes to the ATP binding site.

Belongs to the ATPase alpha/beta chains family. F-type ATPases have 2 components, CF(1) - the catalytic core - and CF(0) - the membrane proton channel. CF(1) has five subunits: alpha(3), beta(3), gamma(1), delta(1), epsilon(1). CF(0) has three main subunits: a(1), b(2) and c(9-12). The alpha and beta chains form an alternating ring which encloses part of the gamma chain. CF(1) is attached to CF(0) by a central stalk formed by the gamma and epsilon chains, while a peripheral stalk is formed by the delta and b chains.

The protein resides in the cell inner membrane. It catalyses the reaction ATP + H2O + 4 H(+)(in) = ADP + phosphate + 5 H(+)(out). Functionally, produces ATP from ADP in the presence of a proton gradient across the membrane. The alpha chain is a regulatory subunit. The polypeptide is ATP synthase subunit alpha (Nitrobacter winogradskyi (strain ATCC 25391 / DSM 10237 / CIP 104748 / NCIMB 11846 / Nb-255)).